The chain runs to 208 residues: MEDYLEGLERAMRSMPAAKGTKERFQIPVPRIFYEGKTTVLDNFAAIADALNRDPDHLMKFLLQELGTAGKIEGHRGVFQGKFTEQAIQNQIAAYVDEYVICSECKLPDTHLIKSDRVLMLKCDACGAHRPVKKRKAKAVVARDVIEEGETYELRIESVGSKGDGIAKVDKYLIFVPNTSKGEIVKAKVKKISGTLAFAEIVERKGKA.

The TRAM domain occupies 145 to 203 (VIEEGETYELRIESVGSKGDGIAKVDKYLIFVPNTSKGEIVKAKVKKISGTLAFAEIVE).

It belongs to the eIF-2-beta/eIF-5 family. In terms of assembly, heterotrimer composed of an alpha, a beta and a gamma chain.

In terms of biological role, eIF-2 functions in the early steps of protein synthesis by forming a ternary complex with GTP and initiator tRNA. The chain is Translation initiation factor 2 subunit beta from Methanothrix thermoacetophila (strain DSM 6194 / JCM 14653 / NBRC 101360 / PT) (Methanosaeta thermophila).